Here is a 251-residue protein sequence, read N- to C-terminus: Histocompatibility antigen 60b (251 aa).

A signal peptide spans 1-24; that stretch reads MAKSSLSLNWSLLVLLNFLGATLS. At 25-212 the chain is on the extracellular side; that stretch reads TGTDSLSCEL…NSDTQGLSFT (188 aa). Residues Asn-63, Asn-93, Asn-126, and Asn-189 are each glycosylated (N-linked (GlcNAc...) asparagine). Residues 213 to 233 form a helical membrane-spanning segment; that stretch reads WIVIICIGGIVSFMAFMVFAW. The Cytoplasmic portion of the chain corresponds to 234–251; that stretch reads CMLKKKKGALCCSSSSTT.

The protein belongs to the NKG2D ligand family. In strain C57BL/6J, strongly expressed in cardiac muscle and skeletal muscle, with lower expression levels in spleen, liver, kidney and thymus. In strain BALB/cJ, weakly expressed in cardiac muscle, spleen, kidney and thymus.

The protein resides in the cell membrane. Functionally, ligand for the KLRK1 immunosurveillance receptor. Binding to KLRK1 stimulates cell lysis in vitro. This Mus musculus (Mouse) protein is Histocompatibility antigen 60b.